The chain runs to 392 residues: N-acyl-phosphatidylethanolamine-hydrolyzing phospholipase D (392 aa).

N-acetylmethionine is present on M1. Residues 1-16 (MDENETNQLLMTSNQY) are compositionally biased toward polar residues. The segment at 1 to 39 (MDENETNQLLMTSNQYPKEAVRKRQNSRNSGGSDSSRFS) is disordered. A compositionally biased stretch (low complexity) spans 27 to 36 (SRNSGGSDSS). The Zn(2+) site is built by H183 and H185. Y186 is an an N-acyl-1,2-diacyl-sn-glycero-3-phosphoethanolamine binding site. The Zn(2+) site is built by D187, H188, and H251. The deoxycholate site is built by K254 and M258. D282 contributes to the Zn(2+) binding site. An an N-acyl-1,2-diacyl-sn-glycero-3-phosphoethanolamine-binding site is contributed by H319. H341 is a Zn(2+) binding site. A346 is a binding site for deoxycholate.

This sequence belongs to the NAPE-PLD family. Homodimer. Bile acids promote the assembly of inactive monomers into an active dimer and enable catalysis. It depends on Zn(2+) as a cofactor. Widely expressed. Highest expression in brain, kidney and testis (at protein level). Expressed in adipose tissue (at protein level).

It localises to the golgi apparatus membrane. It is found in the early endosome membrane. The protein localises to the nucleus envelope. Its subcellular location is the nucleus. The protein resides in the nucleoplasm. The enzyme catalyses an N-acyl-1,2-diacyl-sn-glycero-3-phosphoethanolamine + H2O = an N-acylethanolamine + a 1,2-diacyl-sn-glycero-3-phosphate + H(+). The catalysed reaction is N-butanoyl-1-hexadecanoyl-2-(9Z,12Z-octadecadienoyl)-sn-glycero-3-phosphoethanolamine + H2O = N-butanoyl ethanolamine + 1-hexadecanoyl-2-(9Z,12Z-octadecadienoyl)-sn-glycero-3-phosphate + H(+). It catalyses the reaction N-hexanoyl-1-hexadecanoyl-2-(9Z,12Z-octadecadienoyl)-sn-glycero-3-phosphoethanolamine + H2O = N-hexanoyl ethanolamine + 1-hexadecanoyl-2-(9Z,12Z-octadecadienoyl)-sn-glycero-3-phosphate + H(+). It carries out the reaction N-octanoyl-1-hexadecanoyl-2-(9Z,12Z-octadecadienoyl)-sn-glycero-3-phosphoethanolamine + H2O = N-octanoyl ethanolamine + 1-hexadecanoyl-2-(9Z,12Z-octadecadienoyl)-sn-glycero-3-phosphate + H(+). The enzyme catalyses N-decanoyl-1-hexadecanoyl-2-(9Z,12Z-octadecadienoyl)-sn-glycero-3-phosphoethanolamine + H2O = N-decanoyl ethanolamine + 1-hexadecanoyl-2-(9Z,12Z-octadecadienoyl)-sn-glycero-3-phosphate + H(+). The catalysed reaction is N-dodecanoyl-1,2-di-(9Z-octadecenoyl)-sn-glycero-3-phosphoethanolamine + H2O = N-dodecanoylethanolamine + 1,2-di-(9Z-octadecenoyl)-sn-glycero-3-phosphate + H(+). It catalyses the reaction N-tetradecanoyl-1,2-di-(9Z-octadecenoyl)-sn-glycero-3-phosphoethanolamine + H2O = N-tetradecanoylethanolamine + 1,2-di-(9Z-octadecenoyl)-sn-glycero-3-phosphate + H(+). It carries out the reaction N-hexadecanoyl-1,2-di-(9Z-octadecenoyl)-sn-glycero-3-phosphoethanolamine + H2O = N-hexadecanoylethanolamine + 1,2-di-(9Z-octadecenoyl)-sn-glycero-3-phosphate + H(+). The enzyme catalyses N,1-dihexadecanoyl-2-(9Z,12Z-octadecadienoyl)-sn-glycero-3-phosphoethanolamine + H2O = 1-hexadecanoyl-2-(9Z,12Z-octadecadienoyl)-sn-glycero-3-phosphate + N-hexadecanoylethanolamine + H(+). The catalysed reaction is N-octadecanoyl-1,2-di-(9Z-octadecenoyl)-sn-glycero-3-phosphoethanolamine + H2O = N-octadecanoyl ethanolamine + 1,2-di-(9Z-octadecenoyl)-sn-glycero-3-phosphate + H(+). It catalyses the reaction N,1,2-tri-(9Z-octadecenoyl)-sn-glycero-3-phosphoethanolamine + H2O = N-(9Z-octadecenoyl) ethanolamine + 1,2-di-(9Z-octadecenoyl)-sn-glycero-3-phosphate + H(+). It carries out the reaction N-(5Z,8Z,11Z,14Z-eicosatetraenoyl)-1,2-diacyl-sn-glycero-3-phosphoethanolamine + H2O = N-(5Z,8Z,11Z,14Z-eicosatetraenoyl)-ethanolamine + a 1,2-diacyl-sn-glycero-3-phosphate + H(+). The enzyme catalyses N-(5Z,8Z,11Z,14Z-eicosatetraenoyl)-1,2-di-(9Z-octadecenoyl)-sn-glycero-3-phosphoethanolamine + H2O = N-(5Z,8Z,11Z,14Z-eicosatetraenoyl)-ethanolamine + 1,2-di-(9Z-octadecenoyl)-sn-glycero-3-phosphate + H(+). The catalysed reaction is 1-O-(1Z-octadecenoyl)-2-(9Z-octadecenoyl)-sn-glycero-3-phospho-N-hexadecanoyl-ethanolamine + H2O = 1-O-(1Z-octadecenoyl)-2-(9Z-octadecenoyl)-sn-glycero-3-phosphate + N-hexadecanoylethanolamine + H(+). It catalyses the reaction N,1-diacyl-sn-glycero-3-phosphoethanolamine + H2O = an N-acylethanolamine + a 1-acyl-sn-glycero-3-phosphate + H(+). It carries out the reaction N,1-dihexadecanoyl-sn-glycero-3-phosphoethanolamine + H2O = N-hexadecanoylethanolamine + 1-hexadecanoyl-sn-glycero-3-phosphate + H(+). The enzyme catalyses N-(5Z,8Z,11Z,14Z-eicosatetraenoyl)-1-(9Z-octadecenoyl)-sn-glycero-3-phosphoethanolamine + H2O = N-(5Z,8Z,11Z,14Z-eicosatetraenoyl)-ethanolamine + 1-(9Z-octadecenoyl)-sn-glycero-3-phosphate + H(+). Its activity is regulated as follows. Activated by divalent cations. Activated by bile acids. D-type phospholipase that hydrolyzes N-acyl-phosphatidylethanolamines (NAPEs) to produce bioactive N-acylethanolamines/fatty acid ethanolamides (NAEs/FAEs) and phosphatidic acid. Cleaves the terminal phosphodiester bond of diacyl- and alkenylacyl-NAPEs, primarily playing a role in the generation of long-chain saturated and monounsaturated NAEs in the brain. May control NAPE homeostasis in dopaminergic neuron membranes and regulate neuron survival, partly through RAC1 activation. As a regulator of lipid metabolism in the adipose tissue, mediates the crosstalk between adipocytes, gut microbiota and immune cells to control body temperature and weight. In particular, regulates energy homeostasis by promoting cold-induced brown or beige adipocyte differentiation program to generate heat from fatty acids and glucose. Has limited D-type phospholipase activity toward N-acyl lyso-NAPEs. The polypeptide is N-acyl-phosphatidylethanolamine-hydrolyzing phospholipase D (NAPEPLD) (Bos taurus (Bovine)).